Here is a 129-residue protein sequence, read N- to C-terminus: Small ribosomal subunit protein uS11 (129 aa).

Belongs to the universal ribosomal protein uS11 family. As to quaternary structure, part of the 30S ribosomal subunit. Interacts with proteins S7 and S18. Binds to IF-3.

Its function is as follows. Located on the platform of the 30S subunit, it bridges several disparate RNA helices of the 16S rRNA. Forms part of the Shine-Dalgarno cleft in the 70S ribosome. The polypeptide is Small ribosomal subunit protein uS11 (Maridesulfovibrio salexigens (strain ATCC 14822 / DSM 2638 / NCIMB 8403 / VKM B-1763) (Desulfovibrio salexigens)).